A 569-amino-acid polypeptide reads, in one-letter code: Urease subunit alpha (569 aa).

The Urease domain occupies 131–569 (GGIDTHIHFI…LPMAQRYFLL (439 aa)). Residues His136, His138, and Lys219 each contribute to the Ni(2+) site. Lys219 is subject to N6-carboxylysine. Residue His221 participates in substrate binding. Ni(2+) is bound by residues His248 and His274. The active-site Proton donor is His322. Asp362 is a Ni(2+) binding site.

Belongs to the metallo-dependent hydrolases superfamily. Urease alpha subunit family. Heterotrimer of UreA (gamma), UreB (beta) and UreC (alpha) subunits. Three heterotrimers associate to form the active enzyme. It depends on Ni cation as a cofactor. Carboxylation allows a single lysine to coordinate two nickel ions.

The protein localises to the cytoplasm. The catalysed reaction is urea + 2 H2O + H(+) = hydrogencarbonate + 2 NH4(+). It participates in nitrogen metabolism; urea degradation; CO(2) and NH(3) from urea (urease route): step 1/1. The polypeptide is Urease subunit alpha (Synechococcus sp. (strain RCC307)).